The sequence spans 23 residues: M-myrmeciitoxin-Mp2b (23 aa).

Q23 is modified (glutamine amide).

This sequence belongs to the formicidae venom precursor-01 superfamily. Ant pilosulin family. In terms of assembly, heterodimer with M-MIITX-Mp2a (pilosulin-3a) (AC Q26464); disulfide-linked. Only heterodimers (and not monomers) have been identified in the venom. In terms of tissue distribution, expressed by the venom gland.

Its subcellular location is the secreted. Functionally, heterodimer protein that may serve both defensive (pain-inducing) and predatory (insecticidal) roles. Has membrane-disrupting activity and shows induction of non-specific calcium influx into cells,. Shows broad-spectrum activity against a diverse range of bacteria, and cell lines, as well as hemolytic activity (EC(50)=2.18 uM). In vivo, shows moderate insecticidal activity against D.melanogaster and potent anthelmintic activity against the veterinary nematode H.contortus. In addition, intraplantar injection into mice induces nocifensive behavior and mechanical allodynia. This chain is M-myrmeciitoxin-Mp2b, found in Myrmecia pilosula (Jack jumper ant).